The chain runs to 200 residues: Sperm acrosome developmental regulator (200 aa).

S63 is modified (phosphoserine). The span at 167-183 (QERRRRRRMRSHASHTS) shows a compositional bias: basic residues. The segment at 167–200 (QERRRRRRMRSHASHTSRHSESVQGLKHDARSPL) is disordered. Over residues 184–200 (RHSESVQGLKHDARSPL) the composition is skewed to basic and acidic residues.

It is found in the cytoplasmic vesicle. It localises to the secretory vesicle. The protein localises to the acrosome. May play an important role in acrosome formation and nucleus shaping during spermiogenesis. In Rattus norvegicus (Rat), this protein is Sperm acrosome developmental regulator (Spacdr).